The sequence spans 101 residues: Small ribosomal subunit protein uS14 (101 aa).

This sequence belongs to the universal ribosomal protein uS14 family. In terms of assembly, part of the 30S ribosomal subunit. Contacts proteins S3 and S10.

Its function is as follows. Binds 16S rRNA, required for the assembly of 30S particles and may also be responsible for determining the conformation of the 16S rRNA at the A site. The polypeptide is Small ribosomal subunit protein uS14 (Bordetella petrii (strain ATCC BAA-461 / DSM 12804 / CCUG 43448)).